Consider the following 590-residue polypeptide: Aspartate--tRNA(Asp/Asn) ligase (590 aa).

Glutamate 170 contributes to the L-aspartate binding site. Residues 194-197 form an aspartate region; that stretch reads QLFK. Residue arginine 216 participates in L-aspartate binding. ATP-binding positions include 216 to 218 and glutamine 225; that span reads RDE. Histidine 448 contacts L-aspartate. Residue glutamate 482 participates in ATP binding. Arginine 489 serves as a coordination point for L-aspartate. ATP is bound at residue 534-537; it reads GWDR. The tract at residues 557 to 590 is disordered; it reads SGGGADPLTGAPAPITPQQRRESGIDAKPKKDGE. Residues 575–590 are compositionally biased toward basic and acidic residues; sequence QRRESGIDAKPKKDGE.

This sequence belongs to the class-II aminoacyl-tRNA synthetase family. Type 1 subfamily. As to quaternary structure, homodimer.

Its subcellular location is the cytoplasm. The catalysed reaction is tRNA(Asx) + L-aspartate + ATP = L-aspartyl-tRNA(Asx) + AMP + diphosphate. Functionally, aspartyl-tRNA synthetase with relaxed tRNA specificity since it is able to aspartylate not only its cognate tRNA(Asp) but also tRNA(Asn). Reaction proceeds in two steps: L-aspartate is first activated by ATP to form Asp-AMP and then transferred to the acceptor end of tRNA(Asp/Asn). The polypeptide is Aspartate--tRNA(Asp/Asn) ligase (Mycobacterium sp. (strain JLS)).